We begin with the raw amino-acid sequence, 129 residues long: Large ribosomal subunit protein bL20 (129 aa).

Belongs to the bacterial ribosomal protein bL20 family.

Functionally, binds directly to 23S ribosomal RNA and is necessary for the in vitro assembly process of the 50S ribosomal subunit. It is not involved in the protein synthesizing functions of that subunit. The polypeptide is Large ribosomal subunit protein bL20 (Mycobacterium sp. (strain JLS)).